The sequence spans 324 residues: Acetyl-coenzyme A carboxylase carboxyl transferase subunit alpha (324 aa).

The 254-residue stretch at 44 to 297 folds into the CoA carboxyltransferase C-terminal domain; that stretch reads LEERAKQLRY…KAALLRNLAE (254 aa).

This sequence belongs to the AccA family. As to quaternary structure, acetyl-CoA carboxylase is a heterohexamer composed of biotin carboxyl carrier protein (AccB), biotin carboxylase (AccC) and two subunits each of ACCase subunit alpha (AccA) and ACCase subunit beta (AccD).

It is found in the cytoplasm. The enzyme catalyses N(6)-carboxybiotinyl-L-lysyl-[protein] + acetyl-CoA = N(6)-biotinyl-L-lysyl-[protein] + malonyl-CoA. It functions in the pathway lipid metabolism; malonyl-CoA biosynthesis; malonyl-CoA from acetyl-CoA: step 1/1. Its function is as follows. Component of the acetyl coenzyme A carboxylase (ACC) complex. First, biotin carboxylase catalyzes the carboxylation of biotin on its carrier protein (BCCP) and then the CO(2) group is transferred by the carboxyltransferase to acetyl-CoA to form malonyl-CoA. The polypeptide is Acetyl-coenzyme A carboxylase carboxyl transferase subunit alpha (Thermosynechococcus vestitus (strain NIES-2133 / IAM M-273 / BP-1)).